Consider the following 129-residue polypeptide: UPF0325 protein SG1947 (129 aa).

It belongs to the UPF0325 family.

The sequence is that of UPF0325 protein SG1947 from Sodalis glossinidius (strain morsitans).